The chain runs to 359 residues: Histidinol-phosphate aminotransferase (359 aa).

At lysine 217 the chain carries N6-(pyridoxal phosphate)lysine.

Belongs to the class-II pyridoxal-phosphate-dependent aminotransferase family. Histidinol-phosphate aminotransferase subfamily. As to quaternary structure, homodimer. Pyridoxal 5'-phosphate is required as a cofactor.

It catalyses the reaction L-histidinol phosphate + 2-oxoglutarate = 3-(imidazol-4-yl)-2-oxopropyl phosphate + L-glutamate. Its pathway is amino-acid biosynthesis; L-histidine biosynthesis; L-histidine from 5-phospho-alpha-D-ribose 1-diphosphate: step 7/9. This chain is Histidinol-phosphate aminotransferase, found in Citrobacter koseri (strain ATCC BAA-895 / CDC 4225-83 / SGSC4696).